Consider the following 232-residue polypeptide: Triosephosphate isomerase (232 aa).

6 to 8 serves as a coordination point for substrate; it reads NFK. The active-site Electrophile is the His86. Glu155 serves as the catalytic Proton acceptor. Positions 161 and 191 each coordinate substrate.

It belongs to the triosephosphate isomerase family. Homodimer.

The protein localises to the cytoplasm. It catalyses the reaction D-glyceraldehyde 3-phosphate = dihydroxyacetone phosphate. It participates in carbohydrate biosynthesis; gluconeogenesis. The protein operates within carbohydrate degradation; glycolysis; D-glyceraldehyde 3-phosphate from glycerone phosphate: step 1/1. Involved in the gluconeogenesis. Catalyzes stereospecifically the conversion of dihydroxyacetone phosphate (DHAP) to D-glyceraldehyde-3-phosphate (G3P). This chain is Triosephosphate isomerase, found in Nitratiruptor sp. (strain SB155-2).